Consider the following 325-residue polypeptide: Elongation factor P--(R)-beta-lysine ligase (325 aa).

S76–E78 contributes to the substrate binding site. Residues R100 to E102 and N109 each bind ATP. Y118 serves as a coordination point for substrate. ATP is bound at residue E244–L245. E251 is a substrate binding site. ATP is bound at residue G300.

It belongs to the class-II aminoacyl-tRNA synthetase family. EpmA subfamily. As to quaternary structure, homodimer.

The enzyme catalyses D-beta-lysine + L-lysyl-[protein] + ATP = N(6)-((3R)-3,6-diaminohexanoyl)-L-lysyl-[protein] + AMP + diphosphate + H(+). Functionally, with EpmB is involved in the beta-lysylation step of the post-translational modification of translation elongation factor P (EF-P). Catalyzes the ATP-dependent activation of (R)-beta-lysine produced by EpmB, forming a lysyl-adenylate, from which the beta-lysyl moiety is then transferred to the epsilon-amino group of a conserved specific lysine residue in EF-P. This Klebsiella pneumoniae subsp. pneumoniae (strain ATCC 700721 / MGH 78578) protein is Elongation factor P--(R)-beta-lysine ligase.